The primary structure comprises 343 residues: C-X-C chemokine receptor type 6 (343 aa).

The Extracellular segment spans residues 1-33 (MAEYDHYEDDEFFNSFNDSSQKEHQDFLQFSKV). Residue asparagine 17 is glycosylated (N-linked (GlcNAc...) asparagine). The chain crosses the membrane as a helical span at residues 34–60 (FLPCMYLVVFVCGLVGNSLVLVISIFY). The Cytoplasmic segment spans residues 61 to 69 (HKLQSLTDV). A helical transmembrane segment spans residues 70–90 (FLVNLPLADLVFVCTLPFWAY). Over 91-104 (AGIHEWIFGQVMCK) the chain is Extracellular. An intrachain disulfide couples cysteine 103 to cysteine 181. Residues 105–126 (TLLGVYTINFYTSMLILTCITV) traverse the membrane as a helical segment. Residues 127-144 (DRFIVVVKATKAYNQQAK) lie on the Cytoplasmic side of the membrane. Residues 145–165 (RMTWGKVICLLIWVISLLVSL) form a helical membrane-spanning segment. Residues 166-188 (PQIIYGNVFNLDKLICRYHDEEI) lie on the Extracellular side of the membrane. Residues 189–216 (STVVLATQMTLGFFLPLLTMIVCYSVII) form a helical membrane-spanning segment. Topologically, residues 217–232 (KTLLHAGGFQKHRSLK) are cytoplasmic. Residues 233 to 260 (IIFLVMAVFLLTQTPFNLVKLIRSTHWE) traverse the membrane as a helical segment. Residues 261-276 (YYAMTSFHYTIIVTEA) are Extracellular-facing. A helical membrane pass occupies residues 277–294 (IAYLRACLNPVLYAFVSL). The Cytoplasmic portion of the chain corresponds to 295–343 (KFRKNFWKLVKDIGCLPYLGVSHQWKSSEDNSKTFSASHNVEATSMFQL).

It belongs to the G-protein coupled receptor 1 family.

The protein localises to the cell membrane. Receptor for the C-X-C chemokine CXCL16. Used as a coreceptor by SIVs and by strains of HIV-2 and m-tropic HIV-1. The protein is C-X-C chemokine receptor type 6 (CXCR6) of Cercocebus atys (Sooty mangabey).